Reading from the N-terminus, the 311-residue chain is Nucleotide-binding protein Acel_1111 (311 aa).

Position 30-37 (G30–S37) interacts with ATP. A GTP-binding site is contributed by D81–S84.

It belongs to the RapZ-like family.

Its function is as follows. Displays ATPase and GTPase activities. The chain is Nucleotide-binding protein Acel_1111 from Acidothermus cellulolyticus (strain ATCC 43068 / DSM 8971 / 11B).